The sequence spans 118 residues: MNTYAFNRELRLLTPEHYQNVFQQAHRAGSPHFTIIARNNNLSHPRLGLAVPKKQIKTAVGRNRFKRLARESFRNTQHQLPNKDFVVIAKKSAQDLSNEELFKLFDKLWHRLSRPSRG.

The protein belongs to the RnpA family. In terms of assembly, consists of a catalytic RNA component (M1 or rnpB) and a protein subunit.

It catalyses the reaction Endonucleolytic cleavage of RNA, removing 5'-extranucleotides from tRNA precursor.. RNaseP catalyzes the removal of the 5'-leader sequence from pre-tRNA to produce the mature 5'-terminus. It can also cleave other RNA substrates such as 4.5S RNA. The protein component plays an auxiliary but essential role in vivo by binding to the 5'-leader sequence and broadening the substrate specificity of the ribozyme. The protein is Ribonuclease P protein component of Vibrio vulnificus (strain CMCP6).